Here is a 374-residue protein sequence, read N- to C-terminus: SKP1-interacting partner 15 (374 aa).

An F-box domain is found at 3 to 48 (SSPVNCLPPDSLHQIFSSLPIRDIMICRSVCKFFNQLLTSQCFIEI).

Part of a SCF (ASK-cullin-F-box) protein ligase complex. Interacts with SKP1A/ASK1, SKP1B/ASK2, ASK11 and ASK13.

The protein localises to the nucleus. The protein operates within protein modification; protein ubiquitination. Component of SCF(ASK-cullin-F-box) E3 ubiquitin ligase complexes, which may mediate the ubiquitination and subsequent proteasomal degradation of target proteins. The chain is SKP1-interacting partner 15 (SKIP15) from Arabidopsis thaliana (Mouse-ear cress).